Here is a 344-residue protein sequence, read N- to C-terminus: Calcium homeostasis modulator protein 3 (344 aa).

Topologically, residues 1 to 20 (MDKFRMLFQHFQSSSESVMN) are cytoplasmic. Positions 9–36 (QHFQSSSESVMNGICLLLAAVTVKLYSS) are central pore. A helical transmembrane segment spans residues 21 to 36 (GICLLLAAVTVKLYSS). Topologically, residues 37–48 (FDFNCPCLVHYN) are extracellular. 2 disulfide bridges follow: C41-C126 and C43-C157. Residues 49-71 (ALYGLGLLLTPPLALFLCGLLAN) traverse the membrane as a helical segment. Topologically, residues 72-98 (RQSVVMVEEWRRPAGHRRKDPGIIRYM) are cytoplasmic. C99 carries S-palmitoyl cysteine lipidation. A helical transmembrane segment spans residues 99–124 (CSSVLQRALAAPLVWILLALLDGKCF). Residues 125–176 (VCAFSSSVDPEKFLDFANMTPSQVQLFLAKVPCKEDELVRDSPARKAVSRYL) lie on the Extracellular side of the membrane. N-linked (GlcNAc...) asparagine glycosylation is present at N142. The helical transmembrane segment at 177-202 (RCLSQAIGWSVTLLLIIAAFLARCLR) threads the bilayer. 2 S-palmitoyl cysteine lipidation sites follow: C200 and C204. Topologically, residues 203–344 (PCFDQTVFLQ…GTRLSQHTDV (142 aa)) are cytoplasmic.

Belongs to the CALHM family. Associates with CALHM1 as a pore-forming subunit in a hetero-hexameric channel complex. In terms of processing, N-glycosylated. Palmitoylated by ZDHHC3 and ZDHHC15. Palmitoylation positively regulates CALHM1:CALHM3 channel conductance. As to expression, specifically expressed in circumvallate taste bud cells.

The protein resides in the basolateral cell membrane. It catalyses the reaction ATP(in) = ATP(out). The catalysed reaction is Ca(2+)(in) = Ca(2+)(out). The enzyme catalyses Na(+)(in) = Na(+)(out). It carries out the reaction K(+)(in) = K(+)(out). It catalyses the reaction chloride(in) = chloride(out). Pore-forming subunit of gustatory voltage-gated ion channels required for sensory perception of sweet, bitter and umami tastes. With CALHM1 forms a fast-activating voltage-gated ATP-release channel in type II taste bud cells, ATP acting as a neurotransmitter to activate afferent neural gustatory pathways. Acts both as a voltage-gated and calcium-activated ion channel: mediates neuronal excitability in response to membrane depolarization and low extracellular Ca(2+) concentration. Has poor ion selectivity and forms a wide pore (around 14 Angstroms) that mediates permeation of small ions including Ca(2+), Na(+), K(+) and Cl(-), as well as larger ions such as ATP(4-). This chain is Calcium homeostasis modulator protein 3, found in Homo sapiens (Human).